The sequence spans 270 residues: A-type potassium channel modulatory protein KCNIP2 (270 aa).

Residues 1–17 (MRGQGRKESLSDSRDLD) show a composition bias toward basic and acidic residues. The segment at 1-33 (MRGQGRKESLSDSRDLDGSYDQLTGHPPGPTKK) is disordered. S9 carries the post-translational modification Phosphoserine. S-palmitoyl cysteine attachment occurs at residues C45 and C46. An EF-hand 1; degenerate domain is found at 81–137 (FELSTVCHRPEGLEQLQEQTKFTRKELQVLYRGFKNECPSGIVNEENFKQIYSQFFP). EF-hand domains follow at residues 140-175 (DSSTYATFLFNAFDTNHDGSVSFEDFVAGLSVILRG), 176-211 (TIDDRLNWAFNLYDLNKDGCITKEEMLDIMKSIYDM), and 224-259 (APREHVESFFQKMDRNKDGVVTIEEFIESCQKDENI). Ca(2+)-binding residues include D153, N155, D157, S159, D164, D189, N191, D193, C195, E200, D237, N239, D241, and E248. Residues 257-270 (ENIMRSMQLFDNVI) form an interaction with KCND2 region.

It belongs to the recoverin family. In terms of assembly, component of heteromultimeric potassium channels. Identified in potassium channel complexes containing KCND1, KCND2, KCND3, KCNIP1, KCNIP2, KCNIP3, KCNIP4, DPP6 and DPP10. The KCND2-KCNIP2 channel complex contains four KCND2 and four KCNIP2 subunits. Interacts with KCND2. Probably part of a complex consisting of KCNIP1, KCNIP2 isoform 3 and KCND2. At least isoform 2 and isoform 3 can self-associate to form homodimers and homotetramers. Isoform 3 interacts with KCNIP1 in a calcium-dependent manner. Interacts with KCND3; each KCNIP2 monomer interacts with two adjacent KCND3 subunits, through both the N-terminal inactivation ball of a KCND3 subunit and a C-terminal helix from the adjacent KCND3 subunit, clamping them together; this interaction modulates the channel gating kinetics. In terms of processing, palmitoylated. Palmitoylation enhances association with the plasma membrane. Expressed in heart ventricle with isoform 1 as most prominent form.

It localises to the cell membrane. Functionally, regulatory subunit of Kv4/D (Shal)-type voltage-gated rapidly inactivating A-type potassium channels. Modulates channel density, inactivation kinetics and rate of recovery from inactivation in a calcium-dependent and isoform-specific manner. Involved in KCND2 and KCND3 trafficking to the cell surface. May be required for the expression of I(To) currents in the heart. This is A-type potassium channel modulatory protein KCNIP2 from Mustela putorius furo (European domestic ferret).